A 507-amino-acid polypeptide reads, in one-letter code: FAD-linked oxidoreductase OXR1 (507 aa).

Residues 1–21 form the signal peptide; it reads MTIKFASLILAGLGLGSGALG. Residues asparagine 34 and asparagine 65 are each glycosylated (N-linked (GlcNAc...) asparagine). The FAD-binding PCMH-type domain occupies 73-245; the sequence is YAPPTFKVSV…VSATYKLKPL (173 aa). N-linked (GlcNAc...) asparagine glycosylation is found at asparagine 263 and asparagine 288.

Belongs to the oxygen-dependent FAD-linked oxidoreductase family. The cofactor is FAD.

The catalysed reaction is dihydropyriculol + A = pyriculol + AH2. The enzyme catalyses dihydropyriculariol + A = pyriculariol + AH2. Its pathway is polyketide biosynthesis. Its function is as follows. FAD-linked oxidoreductase; part of the gene cluster that mediates the biosynthesis of pyriculol and pyriculariol, two heptaketides that induce lesion formation upon application on rice leaves but are dispensable for pathogenicity. The highly reducing polyketide synthase synthesizes the heptaketide backbone of pyriculol and pyriculariol. Pyriculol and pyriculariol contain several hydroxyl moieties and double bonds, so it can be assumed that several reduction steps occur during biosynthesis. These reactions could be executed by PKS19 itself or partly by the tailoring enzymes OXR1, OXR2, RED1, RED2 or RED3, identified within the cluster. The FAD-linked oxidoreductase OXR1 is the only tailoring enzyme for which the function has been determined yet, and is involved in the oxidation of dihydropyriculol and dihydropyriculariol into pyriculol and pyriculariol, respectively. This chain is FAD-linked oxidoreductase OXR1, found in Pyricularia oryzae (strain 70-15 / ATCC MYA-4617 / FGSC 8958) (Rice blast fungus).